The following is a 302-amino-acid chain: 1,2-dihydroxynaphthalene dioxygenase (302 aa).

2 consecutive VOC domains span residues 9–124 (ELGY…IFWG) and 149–270 (GLGH…PGWR). Histidine 152 is a Fe cation binding site. Substrate is bound by residues histidine 152, 199-200 (DH), histidine 215, and tyrosine 256. Residue histidine 215 coordinates Fe cation. Fe cation is bound at residue glutamate 266.

This sequence belongs to the extradiol ring-cleavage dioxygenase family. Fe(2+) is required as a cofactor.

It catalyses the reaction naphthalene-1,2-diol + O2 = 2-hydroxychromene-2-carboxylate + H(+). It participates in aromatic compound metabolism; naphthalene degradation. In terms of biological role, involved in the naphthalene catabolic pathway. Catalyzes the meta-cleavage of 1,2-dihydroxynaphthalene (1,2-DHN) to yield 2-hydroxychromene-2-carboxylic acid. The protein is 1,2-dihydroxynaphthalene dioxygenase (nahC) of Pseudomonas putida (Arthrobacter siderocapsulatus).